We begin with the raw amino-acid sequence, 293 residues long: Protease HtpX (293 aa).

A run of 2 helical transmembrane segments spans residues 4 to 24 and 34 to 54; these read IALFLITNLAVMLVFGLVLSL and GLMIMAGLFGFGGAFVSLLMS. Histidine 139 contributes to the Zn(2+) binding site. Glutamate 140 is an active-site residue. Position 143 (histidine 143) interacts with Zn(2+). Transmembrane regions (helical) follow at residues 158–178 and 193–213; these read IVNTFVIFISRLIAQVVSGFL and MVYFAVATVLELVFGILASII. Position 222 (glutamate 222) interacts with Zn(2+).

It belongs to the peptidase M48B family. The cofactor is Zn(2+).

It is found in the cell inner membrane. The polypeptide is Protease HtpX (Pectobacterium atrosepticum (strain SCRI 1043 / ATCC BAA-672) (Erwinia carotovora subsp. atroseptica)).